The sequence spans 344 residues: Methionine import ATP-binding protein MetN (344 aa).

In terms of domain architecture, ABC transporter spans 2–241 (IEINQVNKVF…PKTELAHDFI (240 aa)). 38–45 (GSSGAGKS) contributes to the ATP binding site.

Belongs to the ABC transporter superfamily. Methionine importer (TC 3.A.1.24) family. In terms of assembly, the complex is composed of two ATP-binding proteins (MetN), two transmembrane proteins (MetI) and a solute-binding protein (MetQ).

It localises to the cell inner membrane. The enzyme catalyses L-methionine(out) + ATP + H2O = L-methionine(in) + ADP + phosphate + H(+). The catalysed reaction is D-methionine(out) + ATP + H2O = D-methionine(in) + ADP + phosphate + H(+). Part of the ABC transporter complex MetNIQ involved in methionine import. Responsible for energy coupling to the transport system. The sequence is that of Methionine import ATP-binding protein MetN from Vibrio vulnificus (strain YJ016).